The chain runs to 2464 residues: Highly reducing polyketide synthase xilA (2464 aa).

The Ketosynthase family 3 (KS3) domain occupies His9–His437. Catalysis depends on for beta-ketoacyl synthase activity residues Cys182, His318, and His360. The segment covering Gln461–Gly487 has biased composition (low complexity). The interval Gln461 to Ala495 is disordered. Residues Phe589–Leu911 enclose the Malonyl-CoA:ACP transacylase (MAT) domain. An N-terminal hotdog fold region spans residues His983–Phe1121. One can recognise a PKS/mFAS DH domain in the interval His983–Ser1286. The Proton acceptor; for dehydratase activity role is filled by His1015. Positions Gly1133–Ser1286 are C-terminal hotdog fold. Asp1199 acts as the Proton donor; for dehydratase activity in catalysis. The segment at Asn1282 to Thr1490 is methyltransferase (CMeT) domain. Residues Gly1716–Ile2028 enclose the Enoyl reductase (ER) domain. A Ketoreductase (KR) domain is found at Ala2052–Asn2231. In terms of domain architecture, Carrier spans Glu2383–Ala2461. Ser2420 carries the post-translational modification O-(pantetheine 4'-phosphoryl)serine.

Pantetheine 4'-phosphate serves as cofactor.

The protein operates within secondary metabolite biosynthesis. Functionally, highly reducing polyketide synthase; part of the gene cluster that mediates the biosynthesis of the 6-methyl-2-pyrone derivative xylariolide D. XilA produces the 5-alkyl-6-methyl-2-pyrone backbone called prexylariolide D via sequential condensations of 4 malonyl-CoA units with one acetyl-CoA starter unit. During the biosynthesis, the linear polyketide chain is branched by the addition of an acetyl unit as the origin of the methyl group at the 2-pyrone ring. Prexylariolide D is then hydroxylated at the side chain by xilC to form the final product, xylariolide D. In Penicillium rubens (strain ATCC 28089 / DSM 1075 / NRRL 1951 / Wisconsin 54-1255) (Penicillium chrysogenum), this protein is Highly reducing polyketide synthase xilA.